Consider the following 216-residue polypeptide: Superoxide dismutase [Mn], mitochondrial (216 aa).

Residues 1–18 (MSFLNRNLSRTIKAAVRG) constitute a mitochondrion transit peptide. The Mn(2+) site is built by histidine 44, histidine 92, aspartate 176, and histidine 180.

This sequence belongs to the iron/manganese superoxide dismutase family. The cofactor is Mn(2+).

It localises to the mitochondrion matrix. The enzyme catalyses 2 superoxide + 2 H(+) = H2O2 + O2. Its function is as follows. Destroys superoxide anion radicals which are normally produced within the cells and which are toxic to biological systems. This is Superoxide dismutase [Mn], mitochondrial (Sod2) from Glossina morsitans morsitans (Savannah tsetse fly).